The sequence spans 426 residues: Adenylosuccinate synthetase (426 aa).

Residues 12 to 18 and 40 to 42 each bind GTP; these read GDEGKGK and GHT. Asp-13 functions as the Proton acceptor in the catalytic mechanism. Positions 13 and 40 each coordinate Mg(2+). IMP-binding positions include 13–16, 38–41, Thr-128, Arg-142, Gln-223, Thr-238, and Arg-302; these read DEGK and NAGH. The active-site Proton donor is the His-41. 298–304 provides a ligand contact to substrate; sequence TTTGRAR. Residues Arg-304, 330 to 332, and 412 to 414 each bind GTP; these read KLD and SVG.

The protein belongs to the adenylosuccinate synthetase family. Homodimer. It depends on Mg(2+) as a cofactor.

It is found in the cytoplasm. The enzyme catalyses IMP + L-aspartate + GTP = N(6)-(1,2-dicarboxyethyl)-AMP + GDP + phosphate + 2 H(+). The protein operates within purine metabolism; AMP biosynthesis via de novo pathway; AMP from IMP: step 1/2. Plays an important role in the de novo pathway of purine nucleotide biosynthesis. Catalyzes the first committed step in the biosynthesis of AMP from IMP. The protein is Adenylosuccinate synthetase of Thermoanaerobacter pseudethanolicus (strain ATCC 33223 / 39E) (Clostridium thermohydrosulfuricum).